Consider the following 477-residue polypeptide: tRNA-2-methylthio-N(6)-dimethylallyladenosine synthase (477 aa).

One can recognise an MTTase N-terminal domain in the interval Arg9–Thr129. [4Fe-4S] cluster-binding residues include Cys18, Cys54, Cys92, Cys170, Cys174, and Cys177. The region spanning Arg156–Gln386 is the Radical SAM core domain. The region spanning Arg391–Ser453 is the TRAM domain. Positions Lys454 to Ala477 are disordered. Residues Ala464 to Ala477 show a composition bias toward low complexity.

The protein belongs to the methylthiotransferase family. MiaB subfamily. In terms of assembly, monomer. The cofactor is [4Fe-4S] cluster.

It localises to the cytoplasm. It carries out the reaction N(6)-dimethylallyladenosine(37) in tRNA + (sulfur carrier)-SH + AH2 + 2 S-adenosyl-L-methionine = 2-methylsulfanyl-N(6)-dimethylallyladenosine(37) in tRNA + (sulfur carrier)-H + 5'-deoxyadenosine + L-methionine + A + S-adenosyl-L-homocysteine + 2 H(+). In terms of biological role, catalyzes the methylthiolation of N6-(dimethylallyl)adenosine (i(6)A), leading to the formation of 2-methylthio-N6-(dimethylallyl)adenosine (ms(2)i(6)A) at position 37 in tRNAs that read codons beginning with uridine. This chain is tRNA-2-methylthio-N(6)-dimethylallyladenosine synthase, found in Nitrobacter winogradskyi (strain ATCC 25391 / DSM 10237 / CIP 104748 / NCIMB 11846 / Nb-255).